The primary structure comprises 79 residues: Conotoxin ArMSGL-0123 (79 aa).

Residues 1–20 (MSRLGIMVLTLLLLVFIVTS) form the signal peptide. A propeptide spanning residues 21-44 (HQDAGEKQATKRAAVNFRWRRSFT) is cleaved from the precursor. Disulfide bonds link Cys-52/Cys-64, Cys-56/Cys-73, and Cys-63/Cys-77. Leu-78 carries the post-translational modification Leucine amide.

Belongs to the conotoxin O3 superfamily. As to expression, expressed by the venom duct.

Its subcellular location is the secreted. In Conus arenatus (Sand-dusted cone), this protein is Conotoxin ArMSGL-0123.